A 407-amino-acid polypeptide reads, in one-letter code: Zinc finger protein 174 (407 aa).

Positions 1–20 are disordered; the sequence is MAAKMEITLSSNTEASSKQE. Lys26 is covalently cross-linked (Glycyl lysine isopeptide (Lys-Gly) (interchain with G-Cter in SUMO2)). The 66-residue stretch at 59-124 folds into the SCAN box domain; it reads GPQEALSQLR…KEIVTLVEDF (66 aa). The tract at residues 150-270 is disordered; the sequence is GSQLGEQELP…RRQVSSPNAQ (121 aa). A Glycyl lysine isopeptide (Lys-Gly) (interchain with G-Cter in SUMO2) cross-link involves residue Lys204. Over residues 211 to 221 the composition is skewed to basic and acidic residues; it reads PRMRSDNKENP. Residues Lys230 and Lys271 each participate in a glycyl lysine isopeptide (Lys-Gly) (interchain with G-Cter in SUMO2) cross-link. 3 consecutive C2H2-type zinc fingers follow at residues 326 to 348, 354 to 376, and 382 to 405; these read YKCDDCGKSFTWNSELKRHKRVH, YTCGECGNCFGRQSTLKLHQRIH, and YQCGQCGKSFRQSSNLHQHHRLHH.

The protein belongs to the krueppel C2H2-type zinc-finger protein family. In terms of assembly, homodimer. Expressed in a variety of organs, but most strongly in adult testis and ovary followed by small intestine, colon, prostate, thymus, spleen, pancreas, skeletal muscle, heart, brain and kidney. Also expressed in umbilical vein endothelial cells, foreskin fibroblast and Hep-G2 cells.

Its subcellular location is the nucleus. Its function is as follows. Transcriptional repressor. In Homo sapiens (Human), this protein is Zinc finger protein 174 (ZNF174).